Consider the following 114-residue polypeptide: Lymphotactin (114 aa).

A signal peptide spans 1-21 (MRLLILALLGICSLTAYIVEG). A disulfide bond links Cys32 and Cys69. A disordered region spans residues 91 to 114 (RNNMIQTKPTGTQQSTNTAVTLTG).

It belongs to the intercrine gamma family. Highest level in spleen, lower in peripheral leukocytes and very low levels in lung, colon and small intestine.

The protein resides in the secreted. In terms of biological role, chemotactic activity for lymphocytes but not for monocytes or neutrophils. In thymus, mediates medullary accumulation of thymic dendritic cells and contributes to regulatoy T cell development, playing a role in self-tolerance establishment. The polypeptide is Lymphotactin (XCL1) (Homo sapiens (Human)).